Reading from the N-terminus, the 335-residue chain is ETS translocation variant 2 (335 aa).

Disordered regions lie at residues Asp-94–His-138 and Gly-201–Ala-220. The segment covering Pro-205–Ala-220 has biased composition (polar residues). Positions Ile-234–Gly-314 form a DNA-binding region, ETS.

This sequence belongs to the ETS family. As to expression, testis.

It is found in the nucleus. Binds to DNA sequences containing the consensus pentanucleotide 5'-CGGA[AT]-3'. The sequence is that of ETS translocation variant 2 (Etv2) from Mus musculus (Mouse).